We begin with the raw amino-acid sequence, 579 residues long: Zinc metalloproteinase nas-11 (579 aa).

The N-terminal stretch at 1–17 is a signal peptide; sequence MTPSLVFLIVVIVVVEG. Residues 18–328 constitute a propeptide that is removed on maturation; that stretch reads QGWRPWDRFN…AAPGSSRLKK (311 aa). Positions 35–58 are disordered; sequence WGGNNWGTRQRNQEPHDIPPPVPP. N-linked (GlcNAc...) asparagine glycosylation occurs at asparagine 256. The span at 293–312 shows a compositional bias: acidic residues; the sequence is GDDEIPLPDADTDDEDDDDS. The segment at 293 to 323 is disordered; sequence GDDEIPLPDADTDDEDDDDSTNSASGAAPGS. The 208-residue stretch at 329-536 folds into the Peptidase M12A domain; it reads SALYFEGNLI…IELLKKMYCQ (208 aa). Intrachain disulfides connect cysteine 375–cysteine 535, cysteine 401–cysteine 421, cysteine 539–cysteine 575, cysteine 546–cysteine 568, and cysteine 555–cysteine 572. Histidine 430 serves as a coordination point for Zn(2+). Glutamate 431 is a catalytic residue. Residues histidine 434 and histidine 440 each coordinate Zn(2+). The N-linked (GlcNAc...) asparagine glycan is linked to asparagine 454. The 37-residue stretch at 539-575 folds into the ShKT domain; sequence CDDKNVYCGAWALKDLCKNPGHDQYMAANCKKSCGLC.

Zn(2+) is required as a cofactor. As to expression, expressed in the anterior part of the intestine, CEP neurons and to a lesser extent in hypodermis.

It is found in the secreted. In terms of biological role, metalloprotease. This is Zinc metalloproteinase nas-11 (nas-11) from Caenorhabditis elegans.